Here is a 176-residue protein sequence, read N- to C-terminus: Interleukin-19 (176 aa).

The signal sequence occupies residues 1-24; the sequence is MKTQCASTWLLGMTLILCSVHIYS. 3 disulfides stabilise this stretch: cysteine 28/cysteine 120, cysteine 74/cysteine 126, and cysteine 75/cysteine 128. N-linked (GlcNAc...) asparagine glycosylation is present at asparagine 56. Asparagine 127 and asparagine 134 each carry an N-linked (GlcNAc...) asparagine glycan.

The protein belongs to the IL-10 family.

The protein localises to the secreted. Cytokine that functions as an anti-inflammatory and proangiogenic factor. Polarizes adaptive immunity to an anti-inflammatory phenotype through induction of T-helper 2 responses by both down-regulation of IFN-gamma and up-regulation of IL4 and IL5. Produced by osteocytes, stimulates granulopoiesis and neutrophil formation. Exerts its biological effect through a receptor complex consisting of a heterodimer of IL20RA and IL20RB. In turn, activates the Janus kinase (JAK) and signal transducer and activator of transcription (STAT) pathway, and importantly, STAT3. In Mus musculus (Mouse), this protein is Interleukin-19 (Il19).